A 282-amino-acid polypeptide reads, in one-letter code: Exo-glucosaminidase LytG (282 aa).

The N-terminal stretch at 1-29 is a signal peptide; the sequence is MARKKLKKRKLLISLFFLVSIPLALFVLA. Residues 203 to 281 form the GW domain; the sequence is SLKSVDLNAS…DDSAVEIKEA (79 aa).

It belongs to the glycosyl hydrolase 73 family. The cofactor is Mg(2+).

The protein resides in the secreted. The protein localises to the cell wall. Its activity is regulated as follows. Inhibited by EDTA. Its function is as follows. Is the major glucosaminidase responsible for peptidoglycan structural determination during vegetative growth. Catalyzes the hydrolysis of 1,4-beta-linkages between N-acetyl-D-glucosamine and N-acetylmuramic acid residues in peptidoglycan. Acts processively from the ends of the glycan strands. Also plays a role in motility, chemotaxis and cell division. This Bacillus subtilis (strain 168) protein is Exo-glucosaminidase LytG (lytG).